We begin with the raw amino-acid sequence, 92 residues long: Small ribosomal subunit protein uS19 (92 aa).

Belongs to the universal ribosomal protein uS19 family.

Protein S19 forms a complex with S13 that binds strongly to the 16S ribosomal RNA. This Prochlorococcus marinus (strain MIT 9312) protein is Small ribosomal subunit protein uS19.